Reading from the N-terminus, the 339-residue chain is Ketol-acid reductoisomerase (NADP(+)) (339 aa).

In terms of domain architecture, KARI N-terminal Rossmann spans 1-182 (MRVYYDRDAD…GGGRSGIIET (182 aa)). NADP(+)-binding positions include 24–27 (YGSQ), Lys48, Ser51, Thr53, and 83–86 (DELQ). Residue His108 is part of the active site. Position 134 (Gly134) interacts with NADP(+). Residues 183-328 (NFREECETDL…AKLRGMMPWI (146 aa)) enclose the KARI C-terminal knotted domain. 4 residues coordinate Mg(2+): Asp191, Glu195, Glu227, and Glu231. Position 252 (Ser252) interacts with substrate.

The protein belongs to the ketol-acid reductoisomerase family. Mg(2+) serves as cofactor.

The enzyme catalyses (2R)-2,3-dihydroxy-3-methylbutanoate + NADP(+) = (2S)-2-acetolactate + NADPH + H(+). It catalyses the reaction (2R,3R)-2,3-dihydroxy-3-methylpentanoate + NADP(+) = (S)-2-ethyl-2-hydroxy-3-oxobutanoate + NADPH + H(+). It functions in the pathway amino-acid biosynthesis; L-isoleucine biosynthesis; L-isoleucine from 2-oxobutanoate: step 2/4. Its pathway is amino-acid biosynthesis; L-valine biosynthesis; L-valine from pyruvate: step 2/4. Its function is as follows. Involved in the biosynthesis of branched-chain amino acids (BCAA). Catalyzes an alkyl-migration followed by a ketol-acid reduction of (S)-2-acetolactate (S2AL) to yield (R)-2,3-dihydroxy-isovalerate. In the isomerase reaction, S2AL is rearranged via a Mg-dependent methyl migration to produce 3-hydroxy-3-methyl-2-ketobutyrate (HMKB). In the reductase reaction, this 2-ketoacid undergoes a metal-dependent reduction by NADPH to yield (R)-2,3-dihydroxy-isovalerate. The polypeptide is Ketol-acid reductoisomerase (NADP(+)) (Rhizobium johnstonii (strain DSM 114642 / LMG 32736 / 3841) (Rhizobium leguminosarum bv. viciae)).